We begin with the raw amino-acid sequence, 468 residues long: 6-phospho-beta-galactosidase (468 aa).

Residues Q19, H116, N159, E160, and N297 each contribute to the D-galactose 6-phosphate site. E160 functions as the Proton donor in the catalytic mechanism. The active-site Nucleophile is E375. D-galactose 6-phosphate-binding residues include S428, W429, K435, and Y437.

It belongs to the glycosyl hydrolase 1 family.

It catalyses the reaction a 6-phospho-beta-D-galactoside + H2O = D-galactose 6-phosphate + an alcohol. It functions in the pathway carbohydrate metabolism; lactose degradation; D-galactose 6-phosphate and beta-D-glucose from lactose 6-phosphate: step 1/1. The polypeptide is 6-phospho-beta-galactosidase (Lactococcus lactis subsp. lactis (Streptococcus lactis)).